Reading from the N-terminus, the 296-residue chain is Remorin 4.1 (296 aa).

Disordered regions lie at residues 1–78 (MLTL…SGEN), 121–142 (TRIG…DSNP), and 242–266 (EKTQ…EGKR). Residues 21–39 (ASDRRDETPSSEIVVRDIH) show a composition bias toward basic and acidic residues. Composition is skewed to polar residues over residues 41–53 (MTTT…PQQR) and 62–78 (PSRS…SGEN). Basic and acidic residues-rich tracts occupy residues 121–135 (TRIG…HGQV) and 253–266 (RKAE…EGKR). Residues 226–261 (MKKIERKLEDRRAKAMEKTQNKVAKAQRKAEERRAT) are a coiled coil.

It belongs to the remorin family. Forms homodimer and heterodimer with REM4.2. Interacts with KIN11. Phosphorylated by KIN11. In terms of processing, probably ubiquitinated and degraded by the 26S proteasome pathway. In terms of tissue distribution, predominantly detected in bud, stem, root, flower, silique, and leaves, and enhanced dramatically in senescence leaf.

The protein resides in the cell membrane. Functionally, collaborates with REM4.2 to positively regulate the BCTV and BSCTV susceptibility. This is Remorin 4.1 from Arabidopsis thaliana (Mouse-ear cress).